The sequence spans 345 residues: Small ribosomal subunit protein mS45 (345 aa).

A mitochondrion-targeting transit peptide spans 1–27 (MSYGLTGTSSKLRGTSSIFSWTQVRHF).

It belongs to the mitochondrion-specific ribosomal protein mS45 family. Component of the mitochondrial small ribosomal subunit (mt-SSU). Mature yeast 74S mitochondrial ribosomes consist of a small (37S) and a large (54S) subunit. The 37S small subunit contains a 15S ribosomal RNA (15S mt-rRNA) and 34 different proteins. The 54S large subunit contains a 21S rRNA (21S mt-rRNA) and 46 different proteins.

The protein localises to the mitochondrion. Component of the mitochondrial ribosome (mitoribosome), a dedicated translation machinery responsible for the synthesis of mitochondrial genome-encoded proteins, including at least some of the essential transmembrane subunits of the mitochondrial respiratory chain. The mitoribosomes are attached to the mitochondrial inner membrane and translation products are cotranslationally integrated into the membrane. This chain is Small ribosomal subunit protein mS45 (MRPS35), found in Saccharomyces cerevisiae (strain ATCC 204508 / S288c) (Baker's yeast).